A 294-amino-acid chain; its full sequence is Beta-lactamase (294 aa).

A signal peptide spans M1–A27. The active-site Acyl-ester intermediate is S76. The active-site Proton acceptor is E174. K240–G242 lines the substrate pocket.

This sequence belongs to the class-A beta-lactamase family.

The enzyme catalyses a beta-lactam + H2O = a substituted beta-amino acid. The chain is Beta-lactamase from Citrobacter koseri (Citrobacter diversus).